We begin with the raw amino-acid sequence, 281 residues long: sn-glycerol-3-phosphate transport system permease protein UgpE (281 aa).

Helical transmembrane passes span 16–36 (LILG…AATL), 85–105 (FSIT…IVWF), 113–133 (FFWM…FPTV), 142–162 (LDSY…TFLF), 202–222 (ALFV…LLII), and 247–267 (WNSV…IVLV). The 192-residue stretch at 77-268 (LLNSFVMAFS…IPPVVIVLVM (192 aa)) folds into the ABC transmembrane type-1 domain.

The protein belongs to the binding-protein-dependent transport system permease family. UgpAE subfamily. The complex is composed of two ATP-binding proteins (UgpC), two transmembrane proteins (UgpA and UgpE) and a solute-binding protein (UgpB).

It is found in the cell inner membrane. In terms of biological role, part of the ABC transporter complex UgpBAEC involved in sn-glycerol-3-phosphate (G3P) import. Probably responsible for the translocation of the substrate across the membrane. Can also transport glycerophosphoryl diesters, which are hydrolyzed to G3P and alcohol during transport. The G3P moiety can be detected in the cytoplasm whereas the corresponding alcohol is usually found in the culture medium. It was proposed by Yang et al that the complex could also transport glycerol-2-phosphate (G2P) in vivo, but it was shown later by Wuttge et al that UgpB does not bind G2P, questioning this transport activity. G2P might be converted in the periplasm to G3P before its transport. This chain is sn-glycerol-3-phosphate transport system permease protein UgpE, found in Escherichia coli (strain K12).